The sequence spans 562 residues: Arginine--tRNA ligase 2 (562 aa).

The short motif at 122–132 (PNIAKPFSMGH) is the 'HIGH' region element.

Belongs to the class-I aminoacyl-tRNA synthetase family. Monomer.

The protein localises to the cytoplasm. The enzyme catalyses tRNA(Arg) + L-arginine + ATP = L-arginyl-tRNA(Arg) + AMP + diphosphate. The protein is Arginine--tRNA ligase 2 (argS2) of Bacillus anthracis.